A 538-amino-acid chain; its full sequence is Spindle pole body protein CSA6 (538 aa).

2 disordered regions span residues 1–31 (MEDSTEDIIKSFTLEQSPEIKPKPKSKTSDL) and 57–129 (QNIS…KYQD). Basic and acidic residues-rich tracts occupy residues 18–30 (PEIKPKPKSKTSD) and 57–68 (QNISDSEHDLTP). 2 stretches are compositionally biased toward polar residues: residues 86–96 (KFSSSIPQKPT) and 104–122 (TSPTKNYTDHINQLRSGPN). Positions 144–237 (KQEQNLKLEN…RNERDELVKD (94 aa)) form a coiled coil. Basic and acidic residues predominate over residues 304-323 (KKISEPSAAVEKDTTSEDKT). 2 disordered regions span residues 304–338 (KKISEPSAAVEKDTTSEDKTPPIPNTANSSDTPRM) and 355–458 (SSNN…STKY). Composition is skewed to polar residues over residues 355-392 (SSNNKNTLSPKQAINSQTYSQPNNFSNNTVPPSQSAAY) and 407-425 (TNFYSSSTPNTNGYNQSSQ). Basic and acidic residues predominate over residues 426 to 444 (SDERPETFELPHVAKDHWL). A compositionally biased stretch (polar residues) spans 446–457 (RPTSERSTQSTK).

Its subcellular location is the cytoplasm. It localises to the cytoskeleton. It is found in the microtubule organizing center. The protein resides in the spindle pole body. Plays a role in mitotic spindle pole body organization, possibly at the point of spindle pole body separation. Required for mitotic exit. This Candida albicans (strain SC5314 / ATCC MYA-2876) (Yeast) protein is Spindle pole body protein CSA6.